A 210-amino-acid polypeptide reads, in one-letter code: Holliday junction branch migration complex subunit RuvA (210 aa).

The interval 1–64 (MIGLIEGRVC…EDAQLLYGFL (64 aa)) is domain I. Positions 65 to 143 (HPTERDVFRQ…HIQSDMSLLT (79 aa)) are domain II. The interval 144-154 (EVEQQIGIAAN) is flexible linker. A domain III region spans residues 155-210 (SEGVILAEVESALISLGYRDKEAQQAIKAARETDAGQQLVDTQSLLKLTLKQLSNF).

Belongs to the RuvA family. Homotetramer. Forms an RuvA(8)-RuvB(12)-Holliday junction (HJ) complex. HJ DNA is sandwiched between 2 RuvA tetramers; dsDNA enters through RuvA and exits via RuvB. An RuvB hexamer assembles on each DNA strand where it exits the tetramer. Each RuvB hexamer is contacted by two RuvA subunits (via domain III) on 2 adjacent RuvB subunits; this complex drives branch migration. In the full resolvosome a probable DNA-RuvA(4)-RuvB(12)-RuvC(2) complex forms which resolves the HJ.

The protein resides in the cytoplasm. The RuvA-RuvB-RuvC complex processes Holliday junction (HJ) DNA during genetic recombination and DNA repair, while the RuvA-RuvB complex plays an important role in the rescue of blocked DNA replication forks via replication fork reversal (RFR). RuvA specifically binds to HJ cruciform DNA, conferring on it an open structure. The RuvB hexamer acts as an ATP-dependent pump, pulling dsDNA into and through the RuvAB complex. HJ branch migration allows RuvC to scan DNA until it finds its consensus sequence, where it cleaves and resolves the cruciform DNA. The protein is Holliday junction branch migration complex subunit RuvA of Psychrobacter sp. (strain PRwf-1).